The following is a 207-amino-acid chain: Vascular endothelial growth factor B (207 aa).

A signal peptide spans 1 to 21 (MSPLLRRLLLVALLQLACTQA). Cystine bridges form between cysteine 78/cysteine 122 and cysteine 82/cysteine 124. The tract at residues 140-182 (IPHHRPQPRSVLSWDSAPGASSPADIIHPTPAPGPSAHAAPSA) is disordered.

The protein belongs to the PDGF/VEGF growth factor family. As to quaternary structure, homodimer; disulfide-linked. Can also form heterodimer with VEGF.

Its subcellular location is the secreted. Growth factor for endothelial cells. VEGF-B167 binds heparin and neuropilin-1 whereas the binding to neuropilin-1 of VEGF-B186 is regulated by proteolysis. The protein is Vascular endothelial growth factor B (Vegfb) of Rattus norvegicus (Rat).